We begin with the raw amino-acid sequence, 269 residues long: Hydroxyethylthiazole kinase (269 aa).

M46 provides a ligand contact to substrate. Positions 122 and 168 each coordinate ATP. G195 lines the substrate pocket.

Belongs to the Thz kinase family. Mg(2+) serves as cofactor.

The catalysed reaction is 5-(2-hydroxyethyl)-4-methylthiazole + ATP = 4-methyl-5-(2-phosphooxyethyl)-thiazole + ADP + H(+). The protein operates within cofactor biosynthesis; thiamine diphosphate biosynthesis; 4-methyl-5-(2-phosphoethyl)-thiazole from 5-(2-hydroxyethyl)-4-methylthiazole: step 1/1. Catalyzes the phosphorylation of the hydroxyl group of 4-methyl-5-beta-hydroxyethylthiazole (THZ). This Chloroflexus aurantiacus (strain ATCC 29366 / DSM 635 / J-10-fl) protein is Hydroxyethylthiazole kinase.